Consider the following 224-residue polypeptide: Zinc finger C4H2 domain-containing protein (224 aa).

A coiled-coil region spans residues 12–97 (ENIKEIRNKT…NKLLESTRRL (86 aa)). Disordered regions lie at residues 166–185 (QAAR…QPPP) and 204–224 (PLCK…KPDE). The segment at 189–206 (CLSCHQQIHRNAPICPLC) adopts a C4H2-type zinc-finger fold. A compositionally biased stretch (basic residues) spans 208 to 224 (AKSRSRNPKKPKRKPDE).

It localises to the nucleus. Its subcellular location is the cytoplasm. The protein resides in the postsynaptic cell membrane. Functionally, plays a role in GABAergic and V2 interneurons differentiation. Involved in motoneuron development and in neuromuscular junction formation. This chain is Zinc finger C4H2 domain-containing protein (zc4h2), found in Danio rerio (Zebrafish).